Consider the following 221-residue polypeptide: Ribosomal RNA small subunit methyltransferase G (221 aa).

S-adenosyl-L-methionine-binding positions include G90, L95, 141–142 (VE), and R154.

Belongs to the methyltransferase superfamily. RNA methyltransferase RsmG family.

The protein resides in the cytoplasm. It catalyses the reaction guanosine(527) in 16S rRNA + S-adenosyl-L-methionine = N(7)-methylguanosine(527) in 16S rRNA + S-adenosyl-L-homocysteine. Specifically methylates the N7 position of guanine in position 527 of 16S rRNA. The sequence is that of Ribosomal RNA small subunit methyltransferase G from Polaromonas naphthalenivorans (strain CJ2).